Here is a 574-residue protein sequence, read N- to C-terminus: E3 ubiquitin-protein ligase NEURL1 (574 aa).

Positions 1 to 18 (MGNNFSSVSSLQRGNPSR) are enriched in polar residues. The interval 1–53 (MGNNFSSVSSLQRGNPSRASRGHPQNLKDSIGGSFPVPSHRCHHKQKHCPPTL) is disordered. Residue glycine 2 is the site of N-myristoyl glycine attachment. NHR domains follow at residues 61-217 (TPLL…QLLD) and 292-447 (GDLR…RILG). An RING-type zinc finger spans residues 520 to 560 (ECTICYEHAVDTVIYTCGHMCLCYSCGLRLKKALHACCPIC).

As to quaternary structure, interacts with CPEB3 (via N-terminal domain); the interaction increases CPEB3 ubiquitination. Interacts with DLL1. Post-translationally, myristoylation is a determinant of membrane targeting. In terms of tissue distribution, expressed in CA1 pyramidal neurons (at protein level). Expressed throughout the adult forebrain, including the cerebral cortex, amygdala, striatum, and CA1 area of the hippocampus. Expressed in sensory neurons of the olfactory epithelium, the vomeronasal organ, mammary gland and skeletal muscle.

The protein localises to the cytoplasm. It localises to the perinuclear region. Its subcellular location is the cell membrane. The protein resides in the perikaryon. It is found in the cell projection. The protein localises to the dendrite. It localises to the postsynaptic density. The catalysed reaction is S-ubiquitinyl-[E2 ubiquitin-conjugating enzyme]-L-cysteine + [acceptor protein]-L-lysine = [E2 ubiquitin-conjugating enzyme]-L-cysteine + N(6)-ubiquitinyl-[acceptor protein]-L-lysine.. It functions in the pathway protein modification; protein ubiquitination. Functionally, plays a role in hippocampal-dependent synaptic plasticity, learning and memory. Involved in the formation of spines and functional synaptic contacts by modulating the translational activity of the cytoplasmic polyadenylation element-binding protein CPEB3. Promotes ubiquitination of CPEB3, and hence induces CPEB3-dependent mRNA translation activation of glutamate receptor GRIA1 and GRIA2. Can function as an E3 ubiquitin-protein ligase to activate monoubiquitination of JAG1 (in vitro), thereby regulating the Notch pathway. Acts as a tumor suppressor; inhibits malignant cell transformation of medulloblastoma (MB) cells by inhibiting the Notch signaling pathway. The polypeptide is E3 ubiquitin-protein ligase NEURL1 (Neurl1) (Mus musculus (Mouse)).